Reading from the N-terminus, the 103-residue chain is MERIRDLSSKKAAVIFTKSSCCMCHSIKTLFYELGASPAIHELDKDPEGREMERALRALGSSNPAVPAVFVGGRYIGSAKDIISFHVDGSLKQMLKDAKAIWL.

In terms of domain architecture, Glutaredoxin spans 1-102; that stretch reads MERIRDLSSK…QMLKDAKAIW (102 aa). Cys21 and Cys24 are oxidised to a cystine.

It belongs to the glutaredoxin family. CC-type subfamily.

The protein localises to the cytoplasm. Its function is as follows. Has a glutathione-disulfide oxidoreductase activity in the presence of NADPH and glutathione reductase. Reduces low molecular weight disulfides and proteins. The sequence is that of Glutaredoxin-C11 (GRXC11) from Arabidopsis thaliana (Mouse-ear cress).